The primary structure comprises 441 residues: Ribulose bisphosphate carboxylase large chain (441 aa).

Asn-89 and Thr-139 together coordinate substrate. Residue Lys-141 is the Proton acceptor of the active site. Lys-143 is a binding site for substrate. Residues Lys-167, Asp-169, and Glu-170 each contribute to the Mg(2+) site. At Lys-167 the chain carries N6-carboxylysine. The Proton acceptor role is filled by His-260. Residues Arg-261, His-293, and Ser-345 each contribute to the substrate site.

It belongs to the RuBisCO large chain family. Type I subfamily. Heterohexadecamer of 8 large chains and 8 small chains; disulfide-linked. The disulfide link is formed within the large subunit homodimers. It depends on Mg(2+) as a cofactor. The disulfide bond which can form in the large chain dimeric partners within the hexadecamer appears to be associated with oxidative stress and protein turnover.

The protein resides in the plastid. Its subcellular location is the chloroplast. It catalyses the reaction 2 (2R)-3-phosphoglycerate + 2 H(+) = D-ribulose 1,5-bisphosphate + CO2 + H2O. The catalysed reaction is D-ribulose 1,5-bisphosphate + O2 = 2-phosphoglycolate + (2R)-3-phosphoglycerate + 2 H(+). In terms of biological role, ruBisCO catalyzes two reactions: the carboxylation of D-ribulose 1,5-bisphosphate, the primary event in carbon dioxide fixation, as well as the oxidative fragmentation of the pentose substrate in the photorespiration process. Both reactions occur simultaneously and in competition at the same active site. The protein is Ribulose bisphosphate carboxylase large chain of Viola sororia (Woolly blue violet).